A 396-amino-acid chain; its full sequence is Elongation factor Tu 2 (396 aa).

Positions 10–206 (KPHVNVGTIG…ALDTYIPTPK (197 aa)) constitute a tr-type G domain. Residues 19–26 (GHVDHGKT) form a G1 region. 19 to 26 (GHVDHGKT) lines the GTP pocket. Mg(2+) is bound at residue T26. The G2 stretch occupies residues 60 to 64 (GITIS). Positions 81 to 84 (DCPG) are G3. GTP is bound by residues 81–85 (DCPGH) and 136–139 (NKAD). Residues 136 to 139 (NKAD) form a G4 region. The tract at residues 174–176 (SAL) is G5.

The protein belongs to the TRAFAC class translation factor GTPase superfamily. Classic translation factor GTPase family. EF-Tu/EF-1A subfamily. Monomer.

It is found in the cytoplasm. It carries out the reaction GTP + H2O = GDP + phosphate + H(+). GTP hydrolase that promotes the GTP-dependent binding of aminoacyl-tRNA to the A-site of ribosomes during protein biosynthesis. In Ruthia magnifica subsp. Calyptogena magnifica, this protein is Elongation factor Tu 2.